The primary structure comprises 181 residues: UPF0316 protein Bcer98_2136 (181 aa).

3 helical membrane passes run 6–26, 32–52, and 58–78; these read LIFV…ILLV, SAAG…GIVF, and WMNI…GGYI.

This sequence belongs to the UPF0316 family.

The protein localises to the cell membrane. The chain is UPF0316 protein Bcer98_2136 from Bacillus cytotoxicus (strain DSM 22905 / CIP 110041 / 391-98 / NVH 391-98).